The following is a 1333-amino-acid chain: Elongator complex protein 1 (1333 aa).

A phosphoserine mark is found at serine 805, serine 1172, and serine 1175. A mediates dimerization region spans residues 886–1333 (VDVNELFNHS…RSQWKLSLLE (448 aa)). A disordered region spans residues 1175 to 1209 (SGSEMSGRYSHSNSRISARSSKNRRKAERKKHSLK). The segment at 1192 to 1210 (ARSSKNRRKAERKKHSLKE) is required for binding to tRNA. Basic residues predominate over residues 1195–1207 (SKNRRKAERKKHS).

The protein belongs to the ELP1/IKA1 family. As to quaternary structure, homodimer; dimerization promotes ELP1 stability and elongator complex formation. Component of the elongator complex which consists of ELP1, ELP2, ELP3, ELP4, ELP5 and ELP6. Interacts preferentially with MAP3K14/NIK followed by IKK-alpha and IKK-beta. Phosphorylated. In the testis, expression is restricted to germ cells during spermatogenesis with no expression detected in somatic cells such as Sertoli cells or Leydig cells (at protein level). In the ovary, expressed in oocytes of primary, secondary and antral follicles (at protein level). Widely expressed in adult tissues with highest levels in brain and also expressed at all embryonic stages.

The protein resides in the cytoplasm. Its subcellular location is the nucleus. It functions in the pathway tRNA modification; 5-methoxycarbonylmethyl-2-thiouridine-tRNA biosynthesis. Its function is as follows. Component of the elongator complex which is required for multiple tRNA modifications, including mcm5U (5-methoxycarbonylmethyl uridine), mcm5s2U (5-methoxycarbonylmethyl-2-thiouridine), and ncm5U (5-carbamoylmethyl uridine). The elongator complex catalyzes the formation of carboxymethyluridine in the wobble base at position 34 in tRNAs. Regulates the migration and branching of projection neurons in the developing cerebral cortex, through a process depending on alpha-tubulin acetylation. ELP1 binds to tRNA, mediating interaction of the elongator complex with tRNA. May act as a scaffold protein that assembles active IKK-MAP3K14 complexes (IKKA, IKKB and MAP3K14/NIK). The chain is Elongator complex protein 1 (Elp1) from Mus musculus (Mouse).